A 321-amino-acid chain; its full sequence is Basic peroxidase (321 aa).

Positions 1–30 (MSYHKSSGTILMVPLFMLLISVNYFMSCNA) are cleaved as a signal peptide. Residue Gln-31 is modified to Pyrrolidone carboxylic acid. Cystine bridges form between Cys-41–Cys-117, Cys-74–Cys-79, Cys-123–Cys-317, and Cys-202–Cys-228. His-72 acts as the Proton acceptor in catalysis. Ca(2+)-binding residues include Asp-73, Val-76, Gly-78, Asp-80, and Ser-82. Pro-165 is a binding site for substrate. Heme b is bound at residue His-195. Thr-196 contributes to the Ca(2+) binding site. N-linked (GlcNAc...) asparagine glycosylation is found at Asn-211 and Asn-221. 3 residues coordinate Ca(2+): Asp-241, Thr-244, and Asp-249.

This sequence belongs to the peroxidase family. Classical plant (class III) peroxidase subfamily. Requires heme b as cofactor. The cofactor is Ca(2+). Post-translationally, N-glycosylated. In terms of tissue distribution, expressed in tracheary elements, roots, young and old hypocotyls, and stems in the partially glycosylated form and in roots and young hypocotyls in the fully glycosylated form. None of the isoforms is significantly expressed in leaves or cotyledons.

It is found in the secreted. It catalyses the reaction 2 a phenolic donor + H2O2 = 2 a phenolic radical donor + 2 H2O. In terms of biological role, removal of H(2)O(2), oxidation of toxic reductants, biosynthesis and degradation of lignin, suberization, auxin catabolism, response to environmental stresses such as wounding, pathogen attack and oxidative stress. These functions might be dependent on each isozyme/isoform in each plant tissue. Involved in the synthesis of highly polymerized lignins. The chain is Basic peroxidase (POD1) from Zinnia elegans (Garden zinnia).